A 71-amino-acid chain; its full sequence is Small ribosomal subunit protein bS18 (71 aa).

It belongs to the bacterial ribosomal protein bS18 family. Part of the 30S ribosomal subunit. Forms a tight heterodimer with protein bS6.

Its function is as follows. Binds as a heterodimer with protein bS6 to the central domain of the 16S rRNA, where it helps stabilize the platform of the 30S subunit. The chain is Small ribosomal subunit protein bS18 from Thermosynechococcus vestitus (strain NIES-2133 / IAM M-273 / BP-1).